Reading from the N-terminus, the 607-residue chain is Condensin-2 complex subunit H2 (607 aa).

T19 carries the post-translational modification Phosphothreonine. A phosphoserine mark is found at S95, S231, S235, and S252. Disordered regions lie at residues 211-312 (YPMS…WQSL) and 325-347 (KGKP…KRKG). Residues 254 to 263 (GEEDAEDGAE) are compositionally biased toward acidic residues. S494 is modified (phosphoserine).

It belongs to the CND2 H2 (condensin-2 subunit 2) family. Component of the condensin-2 complex, which contains the SMC2 and SMC4 heterodimer, and three non SMC subunits, NCAPG2, NCAPH2 and NCAPD3 that probably regulate the complex.

Its subcellular location is the nucleus. In terms of biological role, regulatory subunit of the condensin-2 complex, a complex that seems to provide chromosomes with an additional level of organization and rigidity and in establishing mitotic chromosome architecture. May promote the resolution of double-strand DNA catenanes (intertwines) between sister chromatids. Condensin-mediated compaction likely increases tension in catenated sister chromatids, providing directionality for type II topoisomerase-mediated strand exchanges toward chromatid decatenation. Required for decatenation of chromatin bridges at anaphase. Early in neurogenesis, may play an essential role to ensure accurate mitotic chromosome condensation in neuron stem cells, ultimately affecting neuron pool and cortex size. Seems to have lineage-specific role in T-cell development. The chain is Condensin-2 complex subunit H2 from Mus musculus (Mouse).